Consider the following 298-residue polypeptide: Protein transport protein SEC13-1 (298 aa).

WD repeat units lie at residues 7 to 46 (AHNDLIHDAVLDYYGKKLATCSSDKTIKIFEVEGESHKLV), 51 to 92 (GHEG…WSQI), 97 to 138 (VHTA…TATP), 143 to 196 (AHAI…QSYL), 203 to 245 (GHSD…GPWV), and 253 to 292 (EFPDVLWRASWSLSGNILAISGGDNKVTLWKENLNGKWES).

This sequence belongs to the WD repeat SEC13 family. The COPII coat is composed of at least 5 proteins: the SEC23/24 complex, the SEC13/31 complex, and the protein SAR1. Component of the nuclear pore complex (NPC). NPC constitutes the exclusive means of nucleocytoplasmic transport. NPCs allow the passive diffusion of ions and small molecules and the active, nuclear transport receptor-mediated bidirectional transport of macromolecules such as proteins, RNAs, ribonucleoparticles (RNPs), and ribosomal subunits across the nuclear envelope. Due to its 8-fold rotational symmetry, all subunits are present with 8 copies or multiples thereof.

Its subcellular location is the cytoplasmic vesicle. The protein localises to the COPII-coated vesicle membrane. It localises to the endoplasmic reticulum membrane. It is found in the nucleus. The protein resides in the nuclear pore complex. Its function is as follows. Component of the coat protein complex II (COPII) which promotes the formation of transport vesicles from the endoplasmic reticulum (ER). The coat has two main functions, the physical deformation of the endoplasmic reticulum membrane into vesicles and the selection of cargo molecules. It also functions as a component of the nuclear pore complex (NPC). NPC components, collectively referred to as nucleoporins (NUPs), can play the role of both NPC structural components and of docking or interaction partners for transiently associated nuclear transport factors. SEC13 is required for efficient mRNA export from the nucleus to the cytoplasm and for correct nuclear pore biogenesis and distribution. This is Protein transport protein SEC13-1 (SEC131) from Candida glabrata (strain ATCC 2001 / BCRC 20586 / JCM 3761 / NBRC 0622 / NRRL Y-65 / CBS 138) (Yeast).